Consider the following 242-residue polypeptide: Segregation and condensation protein A (242 aa).

The protein belongs to the ScpA family. Component of a cohesin-like complex composed of ScpA, ScpB and the Smc homodimer, in which ScpA and ScpB bind to the head domain of Smc. The presence of the three proteins is required for the association of the complex with DNA.

The protein resides in the cytoplasm. In terms of biological role, participates in chromosomal partition during cell division. May act via the formation of a condensin-like complex containing Smc and ScpB that pull DNA away from mid-cell into both cell halves. The chain is Segregation and condensation protein A from Streptococcus mitis.